A 248-amino-acid polypeptide reads, in one-letter code: Killer cell lectin-like receptor subfamily I member 2 (248 aa).

Residues 1-79 (MHKKKHIKHG…GIDPWLTTWQ (79 aa)) are Cytoplasmic-facing. Residues 19 to 44 (IGTKSPTFQEKQRPSKTDQRSTVWRE) are disordered. Basic and acidic residues predominate over residues 28–44 (EKQRPSKTDQRSTVWRE). The helical; Signal-anchor for type II membrane protein transmembrane segment at 80 to 100 (MITVILATLCIILVTKVGFLI) threads the bilayer. At 101-248 (PSLFSKGEKQ…KKTYICEFNI (148 aa)) the chain is on the extracellular side. Disulfide bonds link Cys132–Cys145, Cys161–Cys244, and Cys223–Cys236. In terms of domain architecture, C-type lectin spans 139 to 245 (FGNNFYCVFR…CSAKKTYICE (107 aa)). N-linked (GlcNAc...) asparagine glycans are attached at residues Asn197, Asn214, and Asn220.

In terms of assembly, heterodimer with KLRE1. As to expression, expressed in natural killer (NK) cells.

The protein localises to the cell membrane. Lectin-like receptor for natural killer (NK) cells. Heterodimer formation with KLRE1 mediates NK cell cytolytic activity. The protein is Killer cell lectin-like receptor subfamily I member 2 of Mus musculus (Mouse).